The following is a 332-amino-acid chain: Ribosomal RNA small subunit methyltransferase C (332 aa).

Belongs to the methyltransferase superfamily. RsmC family. In terms of assembly, monomer.

It localises to the cytoplasm. It catalyses the reaction guanosine(1207) in 16S rRNA + S-adenosyl-L-methionine = N(2)-methylguanosine(1207) in 16S rRNA + S-adenosyl-L-homocysteine + H(+). Functionally, specifically methylates the guanine in position 1207 of 16S rRNA in the 30S particle. This Pseudomonas paraeruginosa (strain DSM 24068 / PA7) (Pseudomonas aeruginosa (strain PA7)) protein is Ribosomal RNA small subunit methyltransferase C.